The chain runs to 246 residues: Proteolipid protein DM gamma (246 aa).

Transmembrane regions (helical) follow at residues 19–35, 71–87, 118–134, and 206–222; these read LLAT…FCGC, VIYG…IILL, VFLT…VFGF, and FIVA…ALLI.

The protein belongs to the myelin proteolipid protein family. As to expression, highly expressed in white matter in myelinating shark brain.

The protein localises to the membrane. The chain is Proteolipid protein DM gamma from Squalus acanthias (Spiny dogfish).